Consider the following 962-residue polypeptide: Integrator complex subunit 7 (962 aa).

A phosphoserine mark is found at Ser338 and Ser809.

Belongs to the Integrator subunit 7 family. As to quaternary structure, component of the Integrator complex, composed of core subunits INTS1, INTS2, INTS3, INTS4, INTS5, INTS6, INTS7, INTS8, INTS9/RC74, INTS10, INTS11/CPSF3L, INTS12, INTS13, INTS14 and INTS15. The core complex associates with protein phosphatase 2A subunits PPP2CA and PPP2R1A, to form the Integrator-PP2A (INTAC) complex. Interacts with NABP2.

It localises to the nucleus. It is found in the chromosome. The protein localises to the cytoplasm. Component of the integrator complex, a multiprotein complex that terminates RNA polymerase II (Pol II) transcription in the promoter-proximal region of genes. The integrator complex provides a quality checkpoint during transcription elongation by driving premature transcription termination of transcripts that are unfavorably configured for transcriptional elongation: the complex terminates transcription by (1) catalyzing dephosphorylation of the C-terminal domain (CTD) of Pol II subunit POLR2A/RPB1 and SUPT5H/SPT5, (2) degrading the exiting nascent RNA transcript via endonuclease activity and (3) promoting the release of Pol II from bound DNA. The integrator complex is also involved in terminating the synthesis of non-coding Pol II transcripts, such as enhancer RNAs (eRNAs), small nuclear RNAs (snRNAs), telomerase RNAs and long non-coding RNAs (lncRNAs). May be not involved in the recruitment of cytoplasmic dynein to the nuclear envelope by different components of the INT complex. Plays a role in DNA damage response (DDR) signaling during the S phase. This is Integrator complex subunit 7 (INTS7) from Bos taurus (Bovine).